The primary structure comprises 164 residues: uncharacterized protein (164 aa).

This is an uncharacterized protein from Acanthamoeba polyphaga mimivirus (APMV).